The following is an 841-amino-acid chain: MAP7 domain-containing protein 1 (841 aa).

Disordered stretches follow at residues 1-151 (MESG…ERAK) and 184-208 (EQRL…EKNK). Residues 22–52 (PPEPRPSPEGDPSPPPPPMSALVPDTPPDTP) show a composition bias toward pro residues. 2 positions are modified to phosphothreonine: T47 and T51. 3 positions are modified to phosphoserine: S70, S86, and S93. Residue T97 is modified to Phosphothreonine. Phosphoserine occurs at positions 113 and 116. At T118 the chain carries Phosphothreonine. Phosphoserine is present on residues S123 and S125. Positions 128–222 (TKQEVKKAGE…AAIQRSVKKT (95 aa)) form a coiled coil. Basic and acidic residues predominate over residues 130 to 151 (QEVKKAGERHKLAKERREERAK). S254, S273, S313, S366, and S399 each carry phosphoserine. Residues 316–813 (TLPRNGRDQG…PSGDKSLSRT (498 aa)) are disordered. The segment covering 365 to 377 (ASASPLTPCSVTR) has biased composition (polar residues). The segment covering 405–435 (RRPEASPVQKKEKKDKERENEKEKSALARER) has biased composition (basic and acidic residues). Positions 412–441 (VQKKEKKDKERENEKEKSALARERSLKKRQ) form a coiled coil. Phosphoserine is present on residues S442, S446, S452, S454, and S460. The segment covering 460–473 (SPKSKARPSSPSTS) has biased composition (low complexity). A Glycyl lysine isopeptide (Lys-Gly) (interchain with G-Cter in SUMO2) cross-link involves residue K462. Phosphoserine is present on residues S479 and S496. Positions 479–497 (SPCPSPGPGHTLPPKPPSP) are enriched in pro residues. The span at 523–539 (PEDKSQSKRRASNEKES) shows a compositional bias: basic and acidic residues. Phosphoserine occurs at positions 544, 548, and 552. The span at 544 to 561 (SPAPSPAPSPTPAPPQKE) shows a compositional bias: pro residues. The residue at position 554 (T554) is a Phosphothreonine. The span at 562–576 (QPPAETPTDAAVLTS) shows a compositional bias: low complexity. Residues 577-586 (PPAPAPPVTP) show a composition bias toward pro residues. The stretch at 593 to 721 (TTDREEATRL…LEEIMKRTRK (129 aa)) forms a coiled coil. Over residues 594-735 (TDREEATRLL…ETKQKQDSKE (142 aa)) the composition is skewed to basic and acidic residues. 2 positions are modified to phosphoserine: S742 and S753. 2 positions are modified to phosphothreonine: T813 and T816. S834 bears the Phosphoserine mark.

The protein belongs to the MAP7 family.

It is found in the cytoplasm. It localises to the cytoskeleton. The protein resides in the spindle. The protein localises to the microtubule organizing center. Its subcellular location is the centrosome. It is found in the midbody. Its function is as follows. Microtubule-stabilizing protein involved in the control of cell motility and neurite outgrowth. Facilitate microtubule stabilization through the maintenance of acetylated stable microtubules. The sequence is that of MAP7 domain-containing protein 1 (MAP7D1) from Homo sapiens (Human).